The following is a 206-amino-acid chain: Small ribosomal subunit protein uS4 (206 aa).

In terms of domain architecture, S4 RNA-binding spans 96 to 168 (SRLDNVVYRM…LELAEQREKP (73 aa)).

This sequence belongs to the universal ribosomal protein uS4 family. Part of the 30S ribosomal subunit. Contacts protein S5. The interaction surface between S4 and S5 is involved in control of translational fidelity.

Functionally, one of the primary rRNA binding proteins, it binds directly to 16S rRNA where it nucleates assembly of the body of the 30S subunit. With S5 and S12 plays an important role in translational accuracy. In Baumannia cicadellinicola subsp. Homalodisca coagulata, this protein is Small ribosomal subunit protein uS4.